A 445-amino-acid polypeptide reads, in one-letter code: Glycine betaine monooxygenase oxygenase subunit (445 aa).

The region spanning 73-180 (WLFVGMTCEI…VTHAGGFLFV (108 aa)) is the Rieske domain. [2Fe-2S] cluster-binding residues include C115, H117, C135, and H138. Residues H234 and H239 each contribute to the Fe cation site.

It belongs to the bacterial ring-hydroxylating dioxygenase alpha subunit family. As to quaternary structure, homotrimer. The system is composed of an oxygenase subunit (BmoA) and a reductase subunit (BmoB). Maximal specific activity is obtained when the ratio of BmoA to BmoB is 5:1. [2Fe-2S] cluster is required as a cofactor. Requires Fe cation as cofactor.

It carries out the reaction glycine betaine + NADH + O2 + H(+) = N,N-dimethylglycine + formaldehyde + NAD(+) + H2O. Its activity is regulated as follows. Activity is absolutely dependent on the presence of BmoB. Glycine betaine monooxygenase activity is significantly enhanced by Fe(2+) and severely inhibited by heavy-metal ions, including Co(2+), Mn(2+), Zn(2+), Cu(2+) and Ag(+). Severely inhibited by EDTA. Functionally, involved in degradation of glycine betaine. Part of a Rieske-type oxygenase system that catalyzes the conversion of glycine betaine (GB) to dimethylglycine (DMG). This subunit is the terminal oxygenase component of the system. Is specific for GB, and does not show any activity on choline, L-carnitine, stachydrine, dimethylglycine or sarcosine. Activity is strictly dependent on NADH. The polypeptide is Glycine betaine monooxygenase oxygenase subunit (Chromohalobacter salexigens (strain ATCC BAA-138 / DSM 3043 / CIP 106854 / NCIMB 13768 / 1H11)).